Reading from the N-terminus, the 1131-residue chain is Protein DWARF 53 (1131 aa).

The region spanning 8-181 (ARQCLSPAAV…KLAILRPAPP (174 aa)) is the Clp R domain. 2 repeat regions span residues 12–85 (LSPA…LDRL) and 103–181 (VSNS…PAPP). The interval 511 to 574 (NRDPYKPFPR…ISSPSVTNKR (64 aa)) is disordered. Residues 558–569 (SSSTARPISSPS) show a composition bias toward low complexity. Residues 578-582 (LVLNL) carry the EAR 1 motif. The tract at residues 588-655 (KSDENLQERG…KRVEDSERSV (68 aa)) is disordered. A compositionally biased stretch (polar residues) spans 597–609 (GMQSQHGTLSNVD). Residues 646-655 (KRVEDSERSV) show a composition bias toward basic and acidic residues. An EAR 2 motif is present at residues 799-803 (LDLNL). 2 disordered regions span residues 951 to 970 (ISDD…RLHR) and 976 to 1002 (FDLN…NSYG). Residues 976-981 (FDLNLP) carry the EAR 3 motif. The span at 982 to 993 (VDEDEPLDADDD) shows a compositional bias: acidic residues.

Belongs to the ClpA/ClpB family. In terms of assembly, interacts with D3. Interacts with D14. The interaction with D14 is enhanced in the presence of strigolactones. The interaction with D14 occurs in the presence of (2'R) stereoisomers of strigolactones, but not (2'S) stereoisomers. Interacts with the TOPLESS-related proteins TPR1, TPR2 and TPR3. Interacts with SPL14/IPA1. In terms of processing, polyubiquitinated. Strigolactone, but not karrikin, triggers rapid SCF(D3)-dependent degradation via the proteasome. Expressed in the shoot bases of seedlings, young leaves, axillary buds and young panicles. Expressed in young roots vasculature, culms, internodes and nodes, preferentially in the parenchyma cells surrounding the xylem.

The protein localises to the nucleus. In terms of biological role, repressor of strigolactones (SL) signaling. Subjected to a negative feedback control of SL signaling. Suppresses the transcriptional activation activity of SPL14/IPA1 in SL signaling. Acts with SPL14/IPA1 to mediate the SL-regulated tiller development. Subject to a negative feedback regulation by SPL14/IPA1, which binds to D53 promoter to repress D53 gene expression. The chain is Protein DWARF 53 from Oryza sativa subsp. japonica (Rice).